A 206-amino-acid chain; its full sequence is RNA-free ribonuclease P (206 aa).

Residues 187 to 206 are disordered; that stretch reads NLAGDDPGHAPPCGPDQPAG. The segment covering 195–206 has biased composition (pro residues); that stretch reads HAPPCGPDQPAG.

This sequence belongs to the HARP family.

It catalyses the reaction Endonucleolytic cleavage of RNA, removing 5'-extranucleotides from tRNA precursor.. In terms of biological role, RNA-free RNase P that catalyzes the removal of the 5'-leader sequence from pre-tRNA to produce the mature 5'-terminus. This chain is RNA-free ribonuclease P, found in Halorhodospira halophila (strain DSM 244 / SL1) (Ectothiorhodospira halophila (strain DSM 244 / SL1)).